The sequence spans 266 residues: uncharacterized protein (266 aa).

Residues 12-28 (ILAAGLAIGCAGGYYAY) form a helical membrane-spanning segment. The FAD-binding FR-type domain maps to 40–140 (EIYAPFTVNK…RGPFKTTKLD (101 aa)).

It belongs to the flavoprotein pyridine nucleotide cytochrome reductase family. Requires FAD as cofactor.

The protein localises to the mitochondrion outer membrane. This is an uncharacterized protein from Schizosaccharomyces pombe (strain 972 / ATCC 24843) (Fission yeast).